Here is a 665-residue protein sequence, read N- to C-terminus: MVEGFSLSLMFLLVSHFFVSGVMSRNFTIENKCDYTVWPGFLTMTTAVSLPTNGFSLKKGESRVINVPPSWSGRLWGRSFCSTSSTGNFSCATGDCGSGKIECSDSGARPPTTLIDFTLDATDGQDFYDVSVVDGYNLPLVVVPQRLGSGRTCSNVGCVVNLNKTCPSELKVMGSSNKEHPIACMNACQKFGLPEFCCYGEYGKPAKCQPTLYSTNFKNECPLAYSYAYDNENNTFRCSNSPNYVITFCPNDISSMSQPSKETNGGTKQKSSWKLKLIVGVSAALTLMILIVVVIIVRTKNMRNSEWNDQNVEAVAMLKRYSYTRVKKMTNSFAHVLGKGGFGTVYKGKLADSGRDVAVKILKVSEGNGEEFINEVASMSRTSHVNIVSLLGFCYEKNKRAIIYEFMPNGSLDKYISANMSTKMEWERLYDVAVGISRGLEYLHNRCVTRIVHFDIKPQNILMDENLCPKISDFGLAKLCKNKESIISMLHMRGTFGYIAPEMFSKNFGAVSHKSDVYSYGMVVLEMIGAKNIEKVEYSGSNNGSMYFPEWVYKDFEKGEITRIFGDSITDEEEKIAKKLVLVALWCIQMNPSDRPPMIKVIEMLEGNLEALQVPPNPLLFSPEETVPDTLEDSDDTSTFFNPSHFERGTLLDSEDVLQHGSRSS.

A signal peptide spans 1–24; it reads MVEGFSLSLMFLLVSHFFVSGVMS. Residues 25–276 lie on the Extracellular side of the membrane; that stretch reads RNFTIENKCD…TKQKSSWKLK (252 aa). Residues N26 and N88 are each glycosylated (N-linked (GlcNAc...) asparagine). Disulfide bonds link C33–C249, C81–C91, C96–C103, C153–C238, C158–C221, C166–C184, C188–C197, and C198–C208. N163 carries an N-linked (GlcNAc...) asparagine glycan. N233 carries an N-linked (GlcNAc...) asparagine glycan. A helical transmembrane segment spans residues 277 to 297; it reads LIVGVSAALTLMILIVVVIIV. Residues 298–665 lie on the Cytoplasmic side of the membrane; that stretch reads RTKNMRNSEW…DVLQHGSRSS (368 aa). Positions 331–620 constitute a Protein kinase domain; sequence NSFAHVLGKG…ALQVPPNPLL (290 aa). Residues 337–345 and K360 contribute to the ATP site; that span reads LGKGGFGTV. Catalysis depends on D455, which acts as the Proton acceptor.

This sequence in the N-terminal section; belongs to the thaumatin family. The protein in the C-terminal section; belongs to the protein kinase superfamily. Ser/Thr protein kinase family. In terms of processing, autophosphorylated in vitro. As to expression, expressed in roots. Expressed at low levels in stems.

It localises to the membrane. The enzyme catalyses L-seryl-[protein] + ATP = O-phospho-L-seryl-[protein] + ADP + H(+). It catalyses the reaction L-threonyl-[protein] + ATP = O-phospho-L-threonyl-[protein] + ADP + H(+). Functionally, possesses kinase activity in vitro. This chain is PR5-like receptor kinase, found in Arabidopsis thaliana (Mouse-ear cress).